The sequence spans 228 residues: LexA repressor (228 aa).

A DNA-binding region (H-T-H motif) is located at residues 28–48; that stretch reads IREIGEALDIRSTNGVNDHLK. Residues serine 146 and lysine 183 each act as for autocatalytic cleavage activity in the active site.

The protein belongs to the peptidase S24 family. Homodimer.

It catalyses the reaction Hydrolysis of Ala-|-Gly bond in repressor LexA.. Its function is as follows. Represses a number of genes involved in the response to DNA damage (SOS response), including recA and lexA. In the presence of single-stranded DNA, RecA interacts with LexA causing an autocatalytic cleavage which disrupts the DNA-binding part of LexA, leading to derepression of the SOS regulon and eventually DNA repair. This chain is LexA repressor, found in Anaeromyxobacter dehalogenans (strain 2CP-1 / ATCC BAA-258).